We begin with the raw amino-acid sequence, 923 residues long: Transportin-3 (923 aa).

At M1 the chain carries N-acetylmethionine. S74 bears the Phosphoserine mark. Residues H242 and T896 each carry the phosphothreonine modification.

Interacts with (GTP-bound) Ran. Interacts with (phosphorylated) SFRS1 and SFRS2; leading to their nuclear import. Interacts with NUP62. Interacts with RBM4. Interacts with CPSF6, promoting its nuclear import.

The protein localises to the nucleus envelope. It localises to the cytoplasm. In terms of biological role, importin, which transports target proteins into the nucleus. Specifically mediates the nuclear import of splicing factor serine/arginine (SR) proteins, such as RBM4, SFRS1 and SFRS2, by recognizing phosphorylated SR domains. Also mediates the nuclear import of serine/arginine (SR) protein CPSF6, independently of CPSF6 phosphorylation. The nuclear import process is regulated by the small GTPase Ran that partitions between cytoplasm and nucleus in the predominantly GDP- and GTP-bound form, respectively. Importin associates with target cargo proteins in the cytoplasm, and the competitive binding of GTP-bound Ran induces the release of cargos in the nucleus. The chain is Transportin-3 from Mus musculus (Mouse).